A 365-amino-acid polypeptide reads, in one-letter code: Ribosomal RNA large subunit methyltransferase F (365 aa).

2 stretches are compositionally biased toward low complexity: residues 1–18 (MPKPAIKTAAKPATSPAG) and 30–42 (AKLKASTAKAASK). Residues 1–50 (MPKPAIKTAAKPATSPAGKRAKPNTPQSVAKLKASTAKAASKPKAKLGEK) form a disordered region.

It belongs to the methyltransferase superfamily. METTL16/RlmF family.

It localises to the cytoplasm. The enzyme catalyses adenosine(1618) in 23S rRNA + S-adenosyl-L-methionine = N(6)-methyladenosine(1618) in 23S rRNA + S-adenosyl-L-homocysteine + H(+). Specifically methylates the adenine in position 1618 of 23S rRNA. This is Ribosomal RNA large subunit methyltransferase F from Shewanella oneidensis (strain ATCC 700550 / JCM 31522 / CIP 106686 / LMG 19005 / NCIMB 14063 / MR-1).